Reading from the N-terminus, the 72-residue chain is MAKDDVIEVEGTVIETLPNAMFRVELENGHTVLAHVSGKIRMHFIRILPGDKVTVELSPYDLTRGRITYRYK.

The region spanning 1–72 (MAKDDVIEVE…TRGRITYRYK (72 aa)) is the S1-like domain. Tyrosine 60 is subject to Phosphotyrosine.

This sequence belongs to the IF-1 family. In terms of assembly, component of the 30S ribosomal translation pre-initiation complex which assembles on the 30S ribosome in the order IF-2 and IF-3, IF-1 and N-formylmethionyl-tRNA(fMet); mRNA recruitment can occur at any time during PIC assembly.

It localises to the cytoplasm. One of the essential components for the initiation of protein synthesis. Stabilizes the binding of IF-2 and IF-3 on the 30S subunit to which N-formylmethionyl-tRNA(fMet) subsequently binds. Helps modulate mRNA selection, yielding the 30S pre-initiation complex (PIC). Upon addition of the 50S ribosomal subunit IF-1, IF-2 and IF-3 are released leaving the mature 70S translation initiation complex. This Geobacillus thermodenitrificans (strain NG80-2) protein is Translation initiation factor IF-1.